Here is a 232-residue protein sequence, read N- to C-terminus: MTRLEIVDSKLRQAKKTEEYFNAIRTNIQFSGKENKILAITSVREGEGKSTTSTSLALSLAQAGFKTLLIDADTRNSVMSGTFKATGTIKGLTNYLSGNADLGDIICETNVPRLMVVPSGKVPPNPTALLQNAYFNKMIEAIKNIFDYIIIDTPPIGLVVDAAIIANACDGFILVTQAGRIKRNYVEKAKEQMEQSGSKFLGIILNKVNESVATYGDYGDYGNYGKRDRKRK.

Belongs to the CpsD/CapB family. In terms of processing, autophosphorylated.

It catalyses the reaction L-tyrosyl-[protein] + ATP = O-phospho-L-tyrosyl-[protein] + ADP + H(+). Its pathway is capsule biogenesis; capsule polysaccharide biosynthesis. Dephosphorylated and activated by CpsB. Functionally, involved in the regulation of capsular polysaccharide biosynthesis. Autophosphorylation of CpsD attenuates its activity and reduces the level of encapsulation. May be part of a complex that directs the coordinated polymerization and export to the cell surface of the capsular polysaccharide. This chain is Tyrosine-protein kinase CpsD (cpsD), found in Streptococcus agalactiae serotype III (strain NEM316).